Here is a 319-residue protein sequence, read N- to C-terminus: Acetyl-coenzyme A carboxylase carboxyl transferase subunit alpha (319 aa).

Positions Asn-32–Ala-293 constitute a CoA carboxyltransferase C-terminal domain.

Belongs to the AccA family. As to quaternary structure, acetyl-CoA carboxylase is a heterohexamer composed of biotin carboxyl carrier protein (AccB), biotin carboxylase (AccC) and two subunits each of ACCase subunit alpha (AccA) and ACCase subunit beta (AccD).

The protein localises to the cytoplasm. The catalysed reaction is N(6)-carboxybiotinyl-L-lysyl-[protein] + acetyl-CoA = N(6)-biotinyl-L-lysyl-[protein] + malonyl-CoA. Its pathway is lipid metabolism; malonyl-CoA biosynthesis; malonyl-CoA from acetyl-CoA: step 1/1. Functionally, component of the acetyl coenzyme A carboxylase (ACC) complex. First, biotin carboxylase catalyzes the carboxylation of biotin on its carrier protein (BCCP) and then the CO(2) group is transferred by the carboxyltransferase to acetyl-CoA to form malonyl-CoA. The sequence is that of Acetyl-coenzyme A carboxylase carboxyl transferase subunit alpha from Xylella fastidiosa (strain Temecula1 / ATCC 700964).